A 201-amino-acid chain; its full sequence is MARYTGPKSRIARKFGEGIFGADKVLSKKNYPPGQHGNNRRRKTSEYGVMLAEKQKAKYTYGVLEKQFRNLFEKAASANGITGEILLQSLEARLDNVVFRLGIAPTRAAARQLVSHKHITVDGKVVNIPSFSVKPGQIVGVRERSKSLEVIANSLAGFNHSKYPWLEWDESSKVGKLLHIPERADIPENIKEHLIVELYSK.

Residues 92–155 enclose the S4 RNA-binding domain; the sequence is ARLDNVVFRL…KSLEVIANSL (64 aa).

This sequence belongs to the universal ribosomal protein uS4 family. Part of the 30S ribosomal subunit. Contacts protein S5. The interaction surface between S4 and S5 is involved in control of translational fidelity.

One of the primary rRNA binding proteins, it binds directly to 16S rRNA where it nucleates assembly of the body of the 30S subunit. Functionally, with S5 and S12 plays an important role in translational accuracy. This chain is Small ribosomal subunit protein uS4, found in Phocaeicola vulgatus (strain ATCC 8482 / DSM 1447 / JCM 5826 / CCUG 4940 / NBRC 14291 / NCTC 11154) (Bacteroides vulgatus).